The following is a 101-amino-acid chain: Large ribosomal subunit protein uL23 (101 aa).

The protein belongs to the universal ribosomal protein uL23 family. As to quaternary structure, part of the 50S ribosomal subunit. Contacts protein L29, and trigger factor when it is bound to the ribosome.

One of the early assembly proteins it binds 23S rRNA. One of the proteins that surrounds the polypeptide exit tunnel on the outside of the ribosome. Forms the main docking site for trigger factor binding to the ribosome. In Azoarcus sp. (strain BH72), this protein is Large ribosomal subunit protein uL23.